A 210-amino-acid chain; its full sequence is Glycerol-3-phosphate acyltransferase (210 aa).

5 consecutive transmembrane segments (helical) span residues Leu-4–Ala-24, Ala-52–Gly-72, Asp-82–Phe-102, Leu-118–Phe-138, and Phe-159–Trp-179.

It belongs to the PlsY family. In terms of assembly, probably interacts with PlsX.

Its subcellular location is the cell inner membrane. It carries out the reaction an acyl phosphate + sn-glycerol 3-phosphate = a 1-acyl-sn-glycero-3-phosphate + phosphate. Its pathway is lipid metabolism; phospholipid metabolism. Functionally, catalyzes the transfer of an acyl group from acyl-phosphate (acyl-PO(4)) to glycerol-3-phosphate (G3P) to form lysophosphatidic acid (LPA). This enzyme utilizes acyl-phosphate as fatty acyl donor, but not acyl-CoA or acyl-ACP. This Paraburkholderia phymatum (strain DSM 17167 / CIP 108236 / LMG 21445 / STM815) (Burkholderia phymatum) protein is Glycerol-3-phosphate acyltransferase.